We begin with the raw amino-acid sequence, 431 residues long: MITDRVSDYLEKIEKSDVNAFIDVNGEKVLKEAEELEKNDTLKNKPLYGKIVAVKSNINVKGYKISCASKTLEKYVGTYDATVVKKLRSQGALIVGMTNMDEFAGGSSGETSCYGPTKNPAAMDRIPGGSSSGSAAAVAADLCDMAIGSDTGGSIRNPASHCGIVGFKPSYGVVSRQGLCDLAMSFDQIGPLTKNAEDALVLTNAIKGIDRSDSTSLETPKFEKKDISNYKIGVVKEFMDVTDEKIRNEIEKGIEVFKDMGCKIVDLSYKYIDLALPTYYLINYVEFFSATRKYDGRRYGEFIEEACGEEVLRRILIGKHISEQEFSGKYYKKALQARKSMKKEMLGLFNSADLIVGPTVPKLPHKLGEDVSPMEMYAYDVLTVPTNICGICSGVVRCGNISGVPVGLQIQGAPLEDEKVLSAMIEFEKNY.

Catalysis depends on charge relay system residues lysine 55 and serine 130. Serine 154 serves as the catalytic Acyl-ester intermediate.

Belongs to the amidase family. GatA subfamily. In terms of assembly, heterotrimer of A, B and C subunits.

It carries out the reaction L-glutamyl-tRNA(Gln) + L-glutamine + ATP + H2O = L-glutaminyl-tRNA(Gln) + L-glutamate + ADP + phosphate + H(+). Functionally, allows the formation of correctly charged Gln-tRNA(Gln) through the transamidation of misacylated Glu-tRNA(Gln) in organisms which lack glutaminyl-tRNA synthetase. The reaction takes place in the presence of glutamine and ATP through an activated gamma-phospho-Glu-tRNA(Gln). This chain is Glutamyl-tRNA(Gln) amidotransferase subunit A, found in Methanococcus maripaludis (strain DSM 14266 / JCM 13030 / NBRC 101832 / S2 / LL).